The primary structure comprises 352 residues: UDP-N-acetylglucosamine--N-acetylmuramyl-(pentapeptide) pyrophosphoryl-undecaprenol N-acetylglucosamine transferase (352 aa).

UDP-N-acetyl-alpha-D-glucosamine is bound by residues 14-16, Asn-124, Arg-164, Ser-185, and Gln-285; that span reads TGG.

The protein belongs to the glycosyltransferase 28 family. MurG subfamily.

The protein resides in the cell inner membrane. The catalysed reaction is di-trans,octa-cis-undecaprenyl diphospho-N-acetyl-alpha-D-muramoyl-L-alanyl-D-glutamyl-meso-2,6-diaminopimeloyl-D-alanyl-D-alanine + UDP-N-acetyl-alpha-D-glucosamine = di-trans,octa-cis-undecaprenyl diphospho-[N-acetyl-alpha-D-glucosaminyl-(1-&gt;4)]-N-acetyl-alpha-D-muramoyl-L-alanyl-D-glutamyl-meso-2,6-diaminopimeloyl-D-alanyl-D-alanine + UDP + H(+). It functions in the pathway cell wall biogenesis; peptidoglycan biosynthesis. Its function is as follows. Cell wall formation. Catalyzes the transfer of a GlcNAc subunit on undecaprenyl-pyrophosphoryl-MurNAc-pentapeptide (lipid intermediate I) to form undecaprenyl-pyrophosphoryl-MurNAc-(pentapeptide)GlcNAc (lipid intermediate II). The sequence is that of UDP-N-acetylglucosamine--N-acetylmuramyl-(pentapeptide) pyrophosphoryl-undecaprenol N-acetylglucosamine transferase from Chlamydia trachomatis serovar A (strain ATCC VR-571B / DSM 19440 / HAR-13).